A 522-amino-acid chain; its full sequence is MDFLLLGLCLHWLLRRPSGVVLCLLGACFQMLPAAPSGCPGQCRCEGRLLYCEALNLTEAPHNLSGLLGLSLRYNSLSELRAGQFTGLMQLTWLYLDHNHICSVQGDAFQKLRRVKELTLSSNQITELANTTFRPMPNLRSVDLSYNKLQALAPDLFHGLRKLTTLHMRANAIQFVPVRIFQDCRSLKFLDIGYNQLKSLARNSFAGLFKLTELHLEHNDLIKVNFAHFPRLISLHSLCLRRNKVAIVVSSLDWVWNLEKMDLSGNEIEYMEPHVFETVPYLQTLQLDSNRLTYIEPRILNSWKSLTSITLAGNLWDCGRNVCALASWLSNFQGRYDANLQCASPEYAQGEDVLDAVYAFHLCEDGAEPTSGHLLSVAVTNRSDLTPPESSATTLVDGGEGHDGTFEPITVALPGGEHAENAVQIHKVVTGTMALIFSFLIVVLVLYVSWKCFPASLRQLRQCFVTQRRKQKQKQTMHQMAAMSAQEYYVDYKPNHIEGALVIINEYGSCTCHQQPARECEV.

The first 34 residues, 1–34 (MDFLLLGLCLHWLLRRPSGVVLCLLGACFQMLPA), serve as a signal peptide directing secretion. The LRRNT domain occupies 35-63 (APSGCPGQCRCEGRLLYCEALNLTEAPHN). Residues 35–427 (APSGCPGQCR…HAENAVQIHK (393 aa)) lie on the Extracellular side of the membrane. N-linked (GlcNAc...) asparagine glycans are attached at residues Asn-56 and Asn-63. LRR repeat units lie at residues 64-87 (LSGLLGLSLRYNSLSELRAGQFTG), 89-111 (MQLTWLYLDHNHICSVQGDAFQK), 112-135 (LRRVKELTLSSNQITELANTTFRP), 136-159 (MPNLRSVDLSYNKLQALAPDLFHG), 161-183 (RKLTTLHMRANAIQFVPVRIFQD), 184-207 (CRSLKFLDIGYNQLKSLARNSFAG), 209-231 (FKLTELHLEHNDLIKVNFAHFPR), 233-255 (ISLHSLCLRRNKVAIVVSSLDWV), 256-278 (WNLEKMDLSGNEIEYMEPHVFET), and 280-302 (PYLQTLQLDSNRLTYIEPRILNS). The N-linked (GlcNAc...) asparagine glycan is linked to Asn-130. In terms of domain architecture, LRRCT spans 314-365 (NLWDCGRNVCALASWLSNFQGRYDANLQCASPEYAQGEDVLDAVYAFHLCED). Residue Asn-381 is glycosylated (N-linked (GlcNAc...) asparagine). A helical membrane pass occupies residues 428-448 (VVTGTMALIFSFLIVVLVLYV). The Cytoplasmic segment spans residues 449–522 (SWKCFPASLR…HQQPARECEV (74 aa)).

It belongs to the LRRTM family. Expressed predominantly in the nervous system by postmitotic neurons, but also in some non-neuronal tissues. In adult brain expression is most prominent in the forebraain, particularly in the thalamus and in the cortical areas including hippocampus, piriform and posterior cingulate.

The protein localises to the cell membrane. It localises to the postsynaptic cell membrane. Exhibits strong synaptogenic activity, restricted to excitatory presynaptic differentiation, acting at both pre- and postsynaptic level. The polypeptide is Leucine-rich repeat transmembrane neuronal protein 1 (Lrrtm1) (Mus musculus (Mouse)).